The sequence spans 153 residues: Histone H2B.6 (153 aa).

Composition is skewed to basic and acidic residues over residues 1–28 and 36–53; these read MAPK…EKAP and EKRL…EGKK. The disordered stretch occupies residues 1-60; it reads MAPKAEKKPAAKKPAEEEPAAEKAEKAPAGKKPKAEKRLPAGKGEKGSGEGKKAGRKKGK. N6-acetyllysine occurs at positions 7 and 37. Lys149 participates in a covalent cross-link: Glycyl lysine isopeptide (Lys-Gly) (interchain with G-Cter in ubiquitin).

It belongs to the histone H2B family. As to quaternary structure, the nucleosome is a histone octamer containing two molecules each of H2A, H2B, H3 and H4 assembled in one H3-H4 heterotetramer and two H2A-H2B heterodimers. The octamer wraps approximately 147 bp of DNA. In terms of processing, can be acetylated to form H2BK6ac and H2BK33ac. Post-translationally, monoubiquitinated by BRE1 to form H2BK143ub1 and deubiquitinated by UBP26. Required for heterochromatic histone H3 di- and trimethylation at H3K4me. May give a specific tag for epigenetic transcriptional activation.

The protein resides in the nucleus. Its subcellular location is the chromosome. Its function is as follows. Core component of nucleosome. Nucleosomes wrap and compact DNA into chromatin, limiting DNA accessibility to the cellular machineries which require DNA as a template. Histones thereby play a central role in transcription regulation, DNA repair, DNA replication and chromosomal stability. DNA accessibility is regulated via a complex set of post-translational modifications of histones, also called histone code, and nucleosome remodeling. The protein is Histone H2B.6 (H2B.6) of Oryza sativa subsp. japonica (Rice).